The chain runs to 165 residues: Putative ankyrin repeat domain-containing protein 20A5 (165 aa).

ANK repeat units lie at residues 66–95 (QHRT…QIDI), 99–128 (ENRT…NPNL), and 132–161 (YGNT…NIEA).

The polypeptide is Putative ankyrin repeat domain-containing protein 20A5 (ANKRD20A5P) (Homo sapiens (Human)).